The chain runs to 368 residues: tRNA-specific 2-thiouridylase MnmA (368 aa).

ATP-binding positions include 11 to 18 (GMSGGVDS) and Met-37. The interaction with target base in tRNA stretch occupies residues 97–99 (NPD). Cys-102 functions as the Nucleophile in the catalytic mechanism. Residues Cys-102 and Cys-199 are joined by a disulfide bond. Gly-127 is a binding site for ATP. The interval 149–151 (KDQ) is interaction with tRNA. Cys-199 (cysteine persulfide intermediate) is an active-site residue. Positions 311–312 (RY) are interaction with tRNA.

This sequence belongs to the MnmA/TRMU family. In terms of assembly, interacts with TusE.

It localises to the cytoplasm. The enzyme catalyses S-sulfanyl-L-cysteinyl-[protein] + uridine(34) in tRNA + AH2 + ATP = 2-thiouridine(34) in tRNA + L-cysteinyl-[protein] + A + AMP + diphosphate + H(+). Functionally, catalyzes the 2-thiolation of uridine at the wobble position (U34) of tRNA(Lys), tRNA(Glu) and tRNA(Gln), leading to the formation of s(2)U34, the first step of tRNA-mnm(5)s(2)U34 synthesis. Sulfur is provided by IscS, via a sulfur-relay system. Binds ATP and its substrate tRNAs. This chain is tRNA-specific 2-thiouridylase MnmA, found in Escherichia coli O139:H28 (strain E24377A / ETEC).